The following is a 346-amino-acid chain: Elongation factor Ts (346 aa).

The interval 80 to 83 (TDFV) is involved in Mg(2+) ion dislocation from EF-Tu.

It belongs to the EF-Ts family.

The protein localises to the cytoplasm. In terms of biological role, associates with the EF-Tu.GDP complex and induces the exchange of GDP to GTP. It remains bound to the aminoacyl-tRNA.EF-Tu.GTP complex up to the GTP hydrolysis stage on the ribosome. The sequence is that of Elongation factor Ts from Streptococcus suis (strain 98HAH33).